Consider the following 285-residue polypeptide: MSFTSRLKKDLFIKAQSLVPQHQLSRVVGKVAESENILIKAAVIQAFKTKYGIDLSIAEQADALKYKSFNEFFTRALKEGVRVVDSATGSIVSPADGAISQLGTIHDGEVFQAKGQSFSVEKLIGDPQLAQPFKQGQFATVYLSPRDYHRVHMPFTGTLTETLYIPGELFSVNQVTAENIPGLFARNERMVCLFDTELGRMAVVLVGAMIVAGIETVVTGKVKPTGRLELNHHDVTLQKGDELGRFYLGSTAIILFEKDKMVWDQQFKANSIVVMGEKLGQSTNP.

Catalysis depends on charge relay system; for autoendoproteolytic cleavage activity residues aspartate 96, histidine 152, and serine 250. Serine 250 acts as the Schiff-base intermediate with substrate; via pyruvic acid; for decarboxylase activity in catalysis. Pyruvic acid (Ser); by autocatalysis is present on serine 250.

Belongs to the phosphatidylserine decarboxylase family. PSD-B subfamily. Prokaryotic type I sub-subfamily. In terms of assembly, heterodimer of a large membrane-associated beta subunit and a small pyruvoyl-containing alpha subunit. Pyruvate is required as a cofactor. In terms of processing, is synthesized initially as an inactive proenzyme. Formation of the active enzyme involves a self-maturation process in which the active site pyruvoyl group is generated from an internal serine residue via an autocatalytic post-translational modification. Two non-identical subunits are generated from the proenzyme in this reaction, and the pyruvate is formed at the N-terminus of the alpha chain, which is derived from the carboxyl end of the proenzyme. The autoendoproteolytic cleavage occurs by a canonical serine protease mechanism, in which the side chain hydroxyl group of the serine supplies its oxygen atom to form the C-terminus of the beta chain, while the remainder of the serine residue undergoes an oxidative deamination to produce ammonia and the pyruvoyl prosthetic group on the alpha chain. During this reaction, the Ser that is part of the protease active site of the proenzyme becomes the pyruvoyl prosthetic group, which constitutes an essential element of the active site of the mature decarboxylase.

The protein resides in the cell membrane. The enzyme catalyses a 1,2-diacyl-sn-glycero-3-phospho-L-serine + H(+) = a 1,2-diacyl-sn-glycero-3-phosphoethanolamine + CO2. Its pathway is phospholipid metabolism; phosphatidylethanolamine biosynthesis; phosphatidylethanolamine from CDP-diacylglycerol: step 2/2. Functionally, catalyzes the formation of phosphatidylethanolamine (PtdEtn) from phosphatidylserine (PtdSer). This Acinetobacter baylyi (strain ATCC 33305 / BD413 / ADP1) protein is Phosphatidylserine decarboxylase proenzyme.